A 149-amino-acid chain; its full sequence is Calmodulin (149 aa).

At Ala2 the chain carries N-acetylalanine. 4 consecutive EF-hand domains span residues Asp8 to Asn43, Pro44 to Asp79, Asp81 to Lys116, and Leu117 to Lys149. Positions 21, 23, 25, 27, 32, 57, 59, 61, 63, 68, 94, 96, 98, and 105 each coordinate Ca(2+). Lys116 carries the N6,N6,N6-trimethyllysine modification. Ca(2+)-binding residues include Asp130, Asp132, Asp134, Gln136, and Glu141.

It belongs to the calmodulin family.

Calmodulin mediates the control of a large number of enzymes, ion channels and other proteins by Ca(2+). Among the enzymes to be stimulated by the calmodulin-Ca(2+) complex are a number of protein kinases and phosphatases. This chain is Calmodulin (CCM1), found in Capsicum annuum (Capsicum pepper).